Consider the following 282-residue polypeptide: Protoheme IX farnesyltransferase (282 aa).

Helical transmembrane passes span 40 to 60, 87 to 107, 108 to 128, 135 to 157, 162 to 184, 204 to 224, 228 to 248, and 261 to 281; these read LVLA…FNMV, AVLA…AVNP, YVFV…TVLL, SVVF…ATGG, GVLL…STYY, AGVV…FLAF, LISA…VAVL, and AYRA…LLVL.

This sequence belongs to the UbiA prenyltransferase family. Protoheme IX farnesyltransferase subfamily.

Its subcellular location is the cell membrane. It catalyses the reaction heme b + (2E,6E)-farnesyl diphosphate + H2O = Fe(II)-heme o + diphosphate. It functions in the pathway porphyrin-containing compound metabolism; heme O biosynthesis; heme O from protoheme: step 1/1. Its function is as follows. Converts heme B (protoheme IX) to heme O by substitution of the vinyl group on carbon 2 of heme B porphyrin ring with a hydroxyethyl farnesyl side group. The chain is Protoheme IX farnesyltransferase from Thermofilum pendens (strain DSM 2475 / Hrk 5).